We begin with the raw amino-acid sequence, 480 residues long: Type VI lipase adapter protein Tla3 (480 aa).

A disordered region spans residues isoleucine 410 to glycine 458.

As to quaternary structure, interacts with the Tle3 toxin on one side and with the H2-T6SS component VgrG2b on the other side.

Its subcellular location is the cytoplasm. In terms of biological role, adapter protein that targets and loads the Tle3 toxin onto the H2 type VI secretion system (H2-T6SS) machinery through an interaction with the TTR domain of VgrG2b. Seems specific for Tle3. In Pseudomonas aeruginosa (strain ATCC 15692 / DSM 22644 / CIP 104116 / JCM 14847 / LMG 12228 / 1C / PRS 101 / PAO1), this protein is Type VI lipase adapter protein Tla3.